A 285-amino-acid polypeptide reads, in one-letter code: 2-dehydro-3-deoxyphosphooctonate aldolase (285 aa).

It belongs to the KdsA family.

The protein localises to the cytoplasm. It catalyses the reaction D-arabinose 5-phosphate + phosphoenolpyruvate + H2O = 3-deoxy-alpha-D-manno-2-octulosonate-8-phosphate + phosphate. It functions in the pathway carbohydrate biosynthesis; 3-deoxy-D-manno-octulosonate biosynthesis; 3-deoxy-D-manno-octulosonate from D-ribulose 5-phosphate: step 2/3. Its pathway is bacterial outer membrane biogenesis; lipopolysaccharide biosynthesis. In Verminephrobacter eiseniae (strain EF01-2), this protein is 2-dehydro-3-deoxyphosphooctonate aldolase.